The primary structure comprises 343 residues: Aspartate carbamoyltransferase catalytic subunit (343 aa).

Residues Arg-91 and Thr-92 each contribute to the carbamoyl phosphate site. Residue Lys-119 participates in L-aspartate binding. Residues Arg-141, His-171, and Gln-174 each contribute to the carbamoyl phosphate site. Arg-204 and Arg-259 together coordinate L-aspartate. 2 residues coordinate carbamoyl phosphate: Gly-300 and Pro-301.

This sequence belongs to the aspartate/ornithine carbamoyltransferase superfamily. ATCase family. Heterododecamer (2C3:3R2) of six catalytic PyrB chains organized as two trimers (C3), and six regulatory PyrI chains organized as three dimers (R2).

The enzyme catalyses carbamoyl phosphate + L-aspartate = N-carbamoyl-L-aspartate + phosphate + H(+). It functions in the pathway pyrimidine metabolism; UMP biosynthesis via de novo pathway; (S)-dihydroorotate from bicarbonate: step 2/3. Catalyzes the condensation of carbamoyl phosphate and aspartate to form carbamoyl aspartate and inorganic phosphate, the committed step in the de novo pyrimidine nucleotide biosynthesis pathway. This Burkholderia multivorans (strain ATCC 17616 / 249) protein is Aspartate carbamoyltransferase catalytic subunit.